The sequence spans 107 residues: Phosphoribosyl-ATP pyrophosphatase (107 aa).

The protein belongs to the PRA-PH family.

The protein localises to the cytoplasm. It carries out the reaction 1-(5-phospho-beta-D-ribosyl)-ATP + H2O = 1-(5-phospho-beta-D-ribosyl)-5'-AMP + diphosphate + H(+). It functions in the pathway amino-acid biosynthesis; L-histidine biosynthesis; L-histidine from 5-phospho-alpha-D-ribose 1-diphosphate: step 2/9. In Bacillus cereus (strain G9842), this protein is Phosphoribosyl-ATP pyrophosphatase.